A 157-amino-acid polypeptide reads, in one-letter code: Endoribonuclease YbeY (157 aa).

His118, His122, and His128 together coordinate Zn(2+).

It belongs to the endoribonuclease YbeY family. It depends on Zn(2+) as a cofactor.

The protein resides in the cytoplasm. Single strand-specific metallo-endoribonuclease involved in late-stage 70S ribosome quality control and in maturation of the 3' terminus of the 16S rRNA. The sequence is that of Endoribonuclease YbeY from Bordetella bronchiseptica (strain ATCC BAA-588 / NCTC 13252 / RB50) (Alcaligenes bronchisepticus).